The primary structure comprises 449 residues: Probable phosphoglucosamine mutase (449 aa).

Ser101 functions as the Phosphoserine intermediate in the catalytic mechanism. Residues Ser101, Asp239, Asp241, and Asp243 each contribute to the Mg(2+) site. The residue at position 101 (Ser101) is a Phosphoserine.

It belongs to the phosphohexose mutase family. Mg(2+) serves as cofactor. In terms of processing, activated by phosphorylation.

It catalyses the reaction alpha-D-glucosamine 1-phosphate = D-glucosamine 6-phosphate. In terms of biological role, catalyzes the conversion of glucosamine-6-phosphate to glucosamine-1-phosphate. In Methanothermobacter thermautotrophicus (strain ATCC 29096 / DSM 1053 / JCM 10044 / NBRC 100330 / Delta H) (Methanobacterium thermoautotrophicum), this protein is Probable phosphoglucosamine mutase.